Reading from the N-terminus, the 354-residue chain is Polyribonucleotide 5'-hydroxyl-kinase PF0112 (354 aa).

ATP is bound at residue 36–43; the sequence is GDVDTGKT.

The cofactor is a divalent metal cation.

It carries out the reaction a 5'-end dephospho-2'-deoxyribonucleoside-DNA + ATP = a 5'-end 5'-phospho-2'-deoxyribonucleoside-DNA + ADP + H(+). It catalyses the reaction a 5'-end dephospho-ribonucleoside-RNA + ATP = a 5'-end 5'-phospho-ribonucleoside-RNA + ADP + H(+). In terms of biological role, polynucleotide kinase that can phosphorylate the 5'-hydroxyl groups of both single-stranded RNA (ssRNA) and single-stranded DNA (ssDNA). Exhibits a strong preference for ssRNA. The chain is Polyribonucleotide 5'-hydroxyl-kinase PF0112 from Pyrococcus furiosus (strain ATCC 43587 / DSM 3638 / JCM 8422 / Vc1).